The sequence spans 136 residues: Ribosome-binding factor A (136 aa).

It belongs to the RbfA family. As to quaternary structure, monomer. Binds 30S ribosomal subunits, but not 50S ribosomal subunits or 70S ribosomes.

It localises to the cytoplasm. In terms of biological role, one of several proteins that assist in the late maturation steps of the functional core of the 30S ribosomal subunit. Associates with free 30S ribosomal subunits (but not with 30S subunits that are part of 70S ribosomes or polysomes). Required for efficient processing of 16S rRNA. May interact with the 5'-terminal helix region of 16S rRNA. The chain is Ribosome-binding factor A from Yersinia pestis bv. Antiqua (strain Antiqua).